Here is a 348-residue protein sequence, read N- to C-terminus: NADH-quinone oxidoreductase subunit H (348 aa).

8 helical membrane-spanning segments follow: residues 10–30 (LPFL…LVLV), 82–102 (GVFL…WAVI), 115–135 (VGLL…IMGG), 161–181 (IGFV…TTIV), 199–219 (FLDW…ISAL), 251–271 (LFFL…TILF), 287–307 (IPGV…FAIV), and 322–342 (LGWK…AAFL).

The protein belongs to the complex I subunit 1 family. In terms of assembly, NDH-1 is composed of 14 different subunits. Subunits NuoA, H, J, K, L, M, N constitute the membrane sector of the complex.

It is found in the cell inner membrane. The catalysed reaction is a quinone + NADH + 5 H(+)(in) = a quinol + NAD(+) + 4 H(+)(out). In terms of biological role, NDH-1 shuttles electrons from NADH, via FMN and iron-sulfur (Fe-S) centers, to quinones in the respiratory chain. The immediate electron acceptor for the enzyme in this species is believed to be ubiquinone. Couples the redox reaction to proton translocation (for every two electrons transferred, four hydrogen ions are translocated across the cytoplasmic membrane), and thus conserves the redox energy in a proton gradient. This subunit may bind ubiquinone. The sequence is that of NADH-quinone oxidoreductase subunit H from Bartonella tribocorum (strain CIP 105476 / IBS 506).